The chain runs to 255 residues: Thiazole synthase (255 aa).

Lysine 96 serves as the catalytic Schiff-base intermediate with DXP. 1-deoxy-D-xylulose 5-phosphate is bound by residues glycine 157, 183–184 (AG), and 205–206 (NT).

The protein belongs to the ThiG family. As to quaternary structure, homotetramer. Forms heterodimers with either ThiH or ThiS.

It is found in the cytoplasm. The catalysed reaction is [ThiS sulfur-carrier protein]-C-terminal-Gly-aminoethanethioate + 2-iminoacetate + 1-deoxy-D-xylulose 5-phosphate = [ThiS sulfur-carrier protein]-C-terminal Gly-Gly + 2-[(2R,5Z)-2-carboxy-4-methylthiazol-5(2H)-ylidene]ethyl phosphate + 2 H2O + H(+). It functions in the pathway cofactor biosynthesis; thiamine diphosphate biosynthesis. Functionally, catalyzes the rearrangement of 1-deoxy-D-xylulose 5-phosphate (DXP) to produce the thiazole phosphate moiety of thiamine. Sulfur is provided by the thiocarboxylate moiety of the carrier protein ThiS. In vitro, sulfur can be provided by H(2)S. The chain is Thiazole synthase from Anoxybacillus flavithermus (strain DSM 21510 / WK1).